Reading from the N-terminus, the 349-residue chain is Phenylalanine--tRNA ligase alpha subunit (349 aa).

Glu259 serves as a coordination point for Mg(2+).

This sequence belongs to the class-II aminoacyl-tRNA synthetase family. Phe-tRNA synthetase alpha subunit type 1 subfamily. As to quaternary structure, tetramer of two alpha and two beta subunits. Requires Mg(2+) as cofactor.

It is found in the cytoplasm. The enzyme catalyses tRNA(Phe) + L-phenylalanine + ATP = L-phenylalanyl-tRNA(Phe) + AMP + diphosphate + H(+). This Lactobacillus johnsonii (strain CNCM I-12250 / La1 / NCC 533) protein is Phenylalanine--tRNA ligase alpha subunit.